A 194-amino-acid polypeptide reads, in one-letter code: PBAN-type neuropeptides (194 aa).

An N-terminal signal peptide occupies residues 1–23; it reads MFNQTQLFVFLAVFTTSSVLGNN. A Leucine amide modification is found at L47. The propeptide occupies 51–94; that stretch reads SLRISTEDNRQAFFKLLEAADALKYYYDQLPYEMQADEPETRVT. 4 positions are modified to leucine amide: L103, L123, L159, and L169. Positions 172–194 are excised as a propeptide; that stretch reads ELSYDMMPNKIRVVRSTNKTRST.

It belongs to the pyrokinin family. In terms of tissue distribution, expressed in the subesophageal ganglions. Not found in corpora cardiaca, corpora allata and thoracic ganglia.

It localises to the secreted. Functionally, a hormone that controls sex pheromone production in females and pheromone responsiveness in male. Also mediates visceral muscle contractile activity (myotropic activity). The chain is PBAN-type neuropeptides from Helicoverpa zea (Corn earworm moth).